We begin with the raw amino-acid sequence, 356 residues long: GDSL esterase/lipase At5g37690 (356 aa).

The signal sequence occupies residues 1 to 18 (MMILRLALAIVISTYATA). The active-site Nucleophile is Ser-34. N-linked (GlcNAc...) asparagine glycosylation is found at Asn-116 and Asn-291. Active-site residues include Asp-322 and His-325.

Belongs to the 'GDSL' lipolytic enzyme family.

Its subcellular location is the secreted. This is GDSL esterase/lipase At5g37690 from Arabidopsis thaliana (Mouse-ear cress).